Reading from the N-terminus, the 55-residue chain is Sec-independent protein translocase protein TatA (55 aa).

The helical transmembrane segment at 1 to 21 (MGMSFSHLLIVLLIIFVLFGA) threads the bilayer.

This sequence belongs to the TatA/E family. As to quaternary structure, the Tat system comprises two distinct complexes: a TatABC complex, containing multiple copies of TatA, TatB and TatC subunits, and a separate TatA complex, containing only TatA subunits. Substrates initially bind to the TatABC complex, which probably triggers association of the separate TatA complex to form the active translocon.

The protein resides in the cell inner membrane. Its function is as follows. Part of the twin-arginine translocation (Tat) system that transports large folded proteins containing a characteristic twin-arginine motif in their signal peptide across membranes. TatA could form the protein-conducting channel of the Tat system. The protein is Sec-independent protein translocase protein TatA of Rickettsia peacockii (strain Rustic).